Here is a 102-residue protein sequence, read N- to C-terminus: Large ribosomal subunit protein bL21 (102 aa).

It belongs to the bacterial ribosomal protein bL21 family. In terms of assembly, part of the 50S ribosomal subunit. Contacts protein L20.

Its function is as follows. This protein binds to 23S rRNA in the presence of protein L20. This chain is Large ribosomal subunit protein bL21, found in Citrifermentans bemidjiense (strain ATCC BAA-1014 / DSM 16622 / JCM 12645 / Bem) (Geobacter bemidjiensis).